Reading from the N-terminus, the 156-residue chain is Cell division protein SepF (156 aa).

Belongs to the SepF family. In terms of assembly, homodimer. Interacts with FtsZ.

The protein resides in the cytoplasm. Functionally, cell division protein that is part of the divisome complex and is recruited early to the Z-ring. Probably stimulates Z-ring formation, perhaps through the cross-linking of FtsZ protofilaments. Its function overlaps with FtsA. This Ruminiclostridium cellulolyticum (strain ATCC 35319 / DSM 5812 / JCM 6584 / H10) (Clostridium cellulolyticum) protein is Cell division protein SepF.